A 143-amino-acid polypeptide reads, in one-letter code: Hemoglobin subunit alpha-2 (143 aa).

An N-acetylserine modification is found at serine 2. The region spanning 2–143 (SLTEKDKAAV…LSLALAEKYR (142 aa)) is the Globin domain. Residue histidine 60 coordinates O2. Histidine 89 is a binding site for heme b.

This sequence belongs to the globin family. As to quaternary structure, hb2 is a heterotetramer of two alpha-2 chains and two beta-1 chains; Hb3 is a heterotetramer of two alpha-2 chains and two beta-2 chains. As to expression, red blood cells.

Its function is as follows. Involved in oxygen transport from gills to the various peripheral tissues. In Anarhichas minor (Arctic spotted wolffish), this protein is Hemoglobin subunit alpha-2 (hba2).